A 144-amino-acid chain; its full sequence is Galectin b (144 aa).

The region spanning Asp1–Val138 is the Galectin domain.

Its function is as follows. Lectin that binds beta-galactoside and a wide array of complex carbohydrates. In Aplysina lactuca (Marine sponge), this protein is Galectin b.